Reading from the N-terminus, the 77-residue chain is U3-theraphotoxin-Hhn1k (77 aa).

Positions 1–14 (TFAGLVLLFVVCYA) are cleaved as a signal peptide. Positions 15–42 (SESEEKEFPKEMLSSIFAVDNDFKQEER) are excised as a propeptide. 2 cysteine pairs are disulfide-bonded: cysteine 44-cysteine 57 and cysteine 56-cysteine 69.

Belongs to the neurotoxin 10 (Hwtx-1) family. 51 (Hntx-8) subfamily. Hntx-8 sub-subfamily. In terms of tissue distribution, expressed by the venom gland.

The protein resides in the secreted. In terms of biological role, ion channel inhibitor. The sequence is that of U3-theraphotoxin-Hhn1k from Cyriopagopus hainanus (Chinese bird spider).